We begin with the raw amino-acid sequence, 206 residues long: Large ribosomal subunit protein uL3 (206 aa).

The segment at 116-149 (GFQGAIKRHNQSRGPMSHGSRYHRRPGSMGPVAP) is disordered.

This sequence belongs to the universal ribosomal protein uL3 family. In terms of assembly, part of the 50S ribosomal subunit. Forms a cluster with proteins L14 and L19.

In terms of biological role, one of the primary rRNA binding proteins, it binds directly near the 3'-end of the 23S rRNA, where it nucleates assembly of the 50S subunit. The sequence is that of Large ribosomal subunit protein uL3 from Shouchella clausii (strain KSM-K16) (Alkalihalobacillus clausii).